We begin with the raw amino-acid sequence, 256 residues long: ATP synthase peripheral stalk subunit b, mitochondrial (256 aa).

Residues 1-42 (MLSRVVLSAAAAAAPSLKNAALLGPGVLQATRIFHTGQPSLA) constitute a mitochondrion transit peptide. K131 carries the N6-succinyllysine modification. An N6-acetyllysine mark is found at K139, K154, K162, K221, K233, and K244.

Belongs to the eukaryotic ATPase B chain family. In terms of assembly, component of the ATP synthase complex composed at least of ATP5F1A/subunit alpha, ATP5F1B/subunit beta, ATP5MC1/subunit c (homooctomer), MT-ATP6/subunit a, MT-ATP8/subunit 8, ATP5ME/subunit e, ATP5MF/subunit f, ATP5MG/subunit g, ATP5MK/subunit k, ATP5MJ/subunit j, ATP5F1C/subunit gamma, ATP5F1D/subunit delta, ATP5F1E/subunit epsilon, ATP5PF/subunit F6, ATP5PB/subunit b, ATP5PD/subunit d, ATP5PO/subunit OSCP. ATP synthase complex consists of a soluble F(1) head domain (subunits alpha(3) and beta(3)) - the catalytic core - and a membrane F(0) domain - the membrane proton channel (subunits c, a, 8, e, f, g, k and j). These two domains are linked by a central stalk (subunits gamma, delta, and epsilon) rotating inside the F1 region and a stationary peripheral stalk (subunits F6, b, d, and OSCP).

It is found in the mitochondrion. The protein resides in the mitochondrion inner membrane. Functionally, subunit b, of the mitochondrial membrane ATP synthase complex (F(1)F(0) ATP synthase or Complex V) that produces ATP from ADP in the presence of a proton gradient across the membrane which is generated by electron transport complexes of the respiratory chain. ATP synthase complex consist of a soluble F(1) head domain - the catalytic core - and a membrane F(1) domain - the membrane proton channel. These two domains are linked by a central stalk rotating inside the F(1) region and a stationary peripheral stalk. During catalysis, ATP synthesis in the catalytic domain of F(1) is coupled via a rotary mechanism of the central stalk subunits to proton translocation. In vivo, can only synthesize ATP although its ATP hydrolase activity can be activated artificially in vitro. Part of the complex F(0) domain. Part of the complex F(0) domain and the peripheric stalk, which acts as a stator to hold the catalytic alpha(3)beta(3) subcomplex and subunit a/ATP6 static relative to the rotary elements. This is ATP synthase peripheral stalk subunit b, mitochondrial from Bos taurus (Bovine).